The following is a 119-amino-acid chain: Ribonuclease P protein component (119 aa).

Belongs to the RnpA family. Consists of a catalytic RNA component (M1 or rnpB) and a protein subunit.

It catalyses the reaction Endonucleolytic cleavage of RNA, removing 5'-extranucleotides from tRNA precursor.. RNaseP catalyzes the removal of the 5'-leader sequence from pre-tRNA to produce the mature 5'-terminus. It can also cleave other RNA substrates such as 4.5S RNA. The protein component plays an auxiliary but essential role in vivo by binding to the 5'-leader sequence and broadening the substrate specificity of the ribozyme. This chain is Ribonuclease P protein component, found in Citrobacter koseri (strain ATCC BAA-895 / CDC 4225-83 / SGSC4696).